A 630-amino-acid chain; its full sequence is Tyrosinase (630 aa).

Residues His-69, His-92, His-101, His-317, His-321, and His-360 each coordinate Cu cation. The 2'-(S-cysteinyl)-histidine (Cys-His) cross-link spans 90–92 (CVH).

The protein belongs to the tyrosinase family. It depends on Cu(2+) as a cofactor.

The catalysed reaction is 2 L-dopa + O2 = 2 L-dopaquinone + 2 H2O. It carries out the reaction L-tyrosine + O2 = L-dopaquinone + H2O. This is a copper-containing oxidase that functions in the formation of pigments such as melanins and other polyphenolic compounds. This Aspergillus fumigatus (strain ATCC MYA-4609 / CBS 101355 / FGSC A1100 / Af293) (Neosartorya fumigata) protein is Tyrosinase (tyr1).